We begin with the raw amino-acid sequence, 102 residues long: Urease subunit beta (102 aa).

The protein belongs to the urease beta subunit family. As to quaternary structure, heterotrimer of UreA (gamma), UreB (beta) and UreC (alpha) subunits. Three heterotrimers associate to form the active enzyme.

It is found in the cytoplasm. The enzyme catalyses urea + 2 H2O + H(+) = hydrogencarbonate + 2 NH4(+). The protein operates within nitrogen metabolism; urea degradation; CO(2) and NH(3) from urea (urease route): step 1/1. The protein is Urease subunit beta of Alteromonas mediterranea (strain DSM 17117 / CIP 110805 / LMG 28347 / Deep ecotype).